The primary structure comprises 362 residues: Endolytic peptidoglycan transglycosylase RlpA (362 aa).

The signal sequence occupies residues 1 to 17 (MRKQWLGICIAAGMLAA). The N-palmitoyl cysteine moiety is linked to residue cysteine 18. The S-diacylglycerol cysteine moiety is linked to residue cysteine 18. The tract at residues 198–276 (PDLSGGAGTS…PSTTPATSPA (79 aa)) is disordered. The segment covering 262 to 276 (PVVTAPSTTPATSPA) has biased composition (low complexity). Residues 285–361 (QSASGNFMVQ…AQLQSFITTA (77 aa)) form the SPOR domain.

Belongs to the RlpA family.

It localises to the cell membrane. Lytic transglycosylase with a strong preference for naked glycan strands that lack stem peptides. This Escherichia coli (strain K12) protein is Endolytic peptidoglycan transglycosylase RlpA.